The primary structure comprises 1812 residues: Sperm flagellar protein 2 (1812 aa).

A Calponin-homology (CH) domain is found at 1 to 105 (MSEILCHWLN…LLYQLYIALQ (105 aa)). Coiled coils occupy residues 178 to 260 (LENF…KDLQ) and 374 to 403 (EERR…EEQA). A compositionally biased stretch (basic and acidic residues) spans 618–630 (EEKASPVRQESGD). Residues 618–658 (EEKASPVRQESGDRSQNLHNVLSAEGTPETEDETRLSTKKT) form a disordered region. 3 coiled-coil regions span residues 724-750 (LNQA…KKSQ), 803-827 (ENIN…DQIQ), and 868-897 (KEMF…KEEF). The span at 879–897 (ENKAKKKSEEKEAEKKEEF) shows a compositional bias: basic and acidic residues. 3 disordered regions span residues 879-1002 (ENKA…KPGS), 1272-1322 (EEKE…APVI), and 1793-1812 (EHIQ…EEKK). Positions 902–913 (ATPPTPPAPPPS) are enriched in pro residues. Composition is skewed to basic and acidic residues over residues 914–929 (EPEK…ERSK), 943–961 (HGNR…ETSP), and 1272–1285 (EEKE…KEKP). A compositionally biased stretch (basic residues) spans 1292-1310 (KKVKKEPPKKKREDKKGKG). The segment at 1317 to 1669 (ESAPVITVEE…AEKTSSFIDM (353 aa)) is interaction with IFT20.

As to quaternary structure, interacts (via C-terminus) with IFT20. Interacts with DYNC1I2. Predominantly expressed in ciliated tissues. Mainly expressed in testis, followed by trachea. Also expressed at lower level in lung, kidney and liver.

Its subcellular location is the cell projection. The protein resides in the cilium. The protein localises to the flagellum. It localises to the cytoplasm. It is found in the golgi apparatus. Its function is as follows. Required for correct axoneme development in spermatozoa. Important for normal development of the manchette and sperm head morphology. Essential for male fertility. Plays a role in localization of the intraflagellar transport protein IFT20 to the manchette, suggesting function as an adapter for dynein-mediated protein transport during spermatogenesis. Also plays a role in bone growth where it seems to be required for normal osteoblast differentiation. In Sus scrofa (Pig), this protein is Sperm flagellar protein 2 (SPEF2).